The sequence spans 263 residues: MSDHGRMHSTGSEVAAPVAPDPDTEGVHPHFNRRVTSFRARRSTISDGQQATWDRLWPQLGRQARDGDEPPGPLDTDAWFGRHAPVVLEIGCGTGTSTLAMAQAEPGIDVVAVEVYRRGLAQLLSAIDRTAATEHPVSNIRLIRGDGVDVLTHMFGSASLTGVRVFFPDPWPKARHHKRRLLQPDTMALIADRLRPGGVLHAATDHQGYAAHIAEVGDAEPRLRRVAMDSADLPMSVTRPVTKYERKALAGPVVTELLWERTP.

The segment at 1–33 (MSDHGRMHSTGSEVAAPVAPDPDTEGVHPHFNR) is disordered. 4 residues coordinate S-adenosyl-L-methionine: E89, E114, D146, and D169. D169 is an active-site residue. Substrate is bound by residues K173, D205, and 242 to 245 (TKYE).

This sequence belongs to the class I-like SAM-binding methyltransferase superfamily. TrmB family.

The catalysed reaction is guanosine(46) in tRNA + S-adenosyl-L-methionine = N(7)-methylguanosine(46) in tRNA + S-adenosyl-L-homocysteine. The protein operates within tRNA modification; N(7)-methylguanine-tRNA biosynthesis. Catalyzes the formation of N(7)-methylguanine at position 46 (m7G46) in tRNA. The sequence is that of tRNA (guanine-N(7)-)-methyltransferase from Mycolicibacterium gilvum (strain PYR-GCK) (Mycobacterium gilvum (strain PYR-GCK)).